The chain runs to 273 residues: Phosphate import ATP-binding protein PstB 1 (273 aa).

Positions 27–268 (ISIEHLSLYY…PLKKQTEDYI (242 aa)) constitute an ABC transporter domain. 59–66 (GPSGCGKS) serves as a coordination point for ATP.

Belongs to the ABC transporter superfamily. Phosphate importer (TC 3.A.1.7) family. As to quaternary structure, the complex is composed of two ATP-binding proteins (PstB), two transmembrane proteins (PstC and PstA) and a solute-binding protein (PstS).

It is found in the cell inner membrane. It catalyses the reaction phosphate(out) + ATP + H2O = ADP + 2 phosphate(in) + H(+). Its function is as follows. Part of the ABC transporter complex PstSACB involved in phosphate import. Responsible for energy coupling to the transport system. This Vibrio cholerae serotype O1 (strain ATCC 39315 / El Tor Inaba N16961) protein is Phosphate import ATP-binding protein PstB 1.